We begin with the raw amino-acid sequence, 138 residues long: Putative pre-16S rRNA nuclease (138 aa).

The protein belongs to the YqgF nuclease family.

It is found in the cytoplasm. Its function is as follows. Could be a nuclease involved in processing of the 5'-end of pre-16S rRNA. The protein is Putative pre-16S rRNA nuclease of Shigella dysenteriae serotype 1 (strain Sd197).